A 469-amino-acid chain; its full sequence is Tetratricopeptide repeat protein 38 (469 aa).

Position 2 is an N-acetylalanine (Ala-2). Position 5 is a phosphoserine (Ser-5). TPR repeat units follow at residues 108–141 (REQL…HPTD), 180–213 (SYVK…NPTD), and 252–285 (CHNY…SLQA).

The protein belongs to the TTC38 family.

This chain is Tetratricopeptide repeat protein 38 (TTC38), found in Pongo abelii (Sumatran orangutan).